Consider the following 652-residue polypeptide: MKKRIKELTDLLNRYRYDYYTKDAPSVSDSDYDKLYRELVTLEQSYPEYVLQDSPTQQVGGTILKGFEKYRHQYPLFSLQDAFSREELDAFDKRVKAEFPNATYLAELKIDGLSISLSYENGFLQVGATRGDGNIGENITENIKKIKDIPYQLSEPLTITVRGEAYMSRQSFKAINEARQENGETEFANPRNAAAGTLRQLDTSVVAKRQLATFLYQEASPTARNQQNEVLAELADLGFSVNPYYQLTSSMDEIWDFIKTIEAKRDQLAYDIDGVVIKVNSLAMQEELGFTVKAPRWAIAYKFPAEEKEAEILSVDWTVGRTGVVTPTANLTPVQLAGTTVSRATLHNVDYIAEKDIRIGDTVIVYKAGDIIPAVLNVVMSKRNQQEVMLIPKLCPSCGSELVHFEDEVALRCINPLCPSLIQRSLEHFASRDAMNITGLGPAIVEKLFLAGFVHDVADIYQLTKEDFMQLDGIKEKSADKLLAAIEASKSNSAEKLLFGLGIRHIGSKVSRLILEVYGDISALLTAKEEEIARIDGLGSTIAQSLTQYFEQKTAAILVDELKTAGVNMHYSGQKVNSDAALFGLTVVLTGKLNQLNRNEAKDKLEALGAKVTGSVSKKTDLVIAGSDAGSKLEKAKSLGIRIEDEDWLRQL.

Residues 29–33 (DSDYD), 78–79 (SL), and Glu-107 each bind NAD(+). Lys-109 serves as the catalytic N6-AMP-lysine intermediate. Positions 130, 164, 278, and 302 each coordinate NAD(+). Residues Cys-395, Cys-398, Cys-413, and Cys-418 each contribute to the Zn(2+) site. One can recognise a BRCT domain in the interval 577–652 (NSDAALFGLT…IEDEDWLRQL (76 aa)).

It belongs to the NAD-dependent DNA ligase family. LigA subfamily. It depends on Mg(2+) as a cofactor. Requires Mn(2+) as cofactor.

It carries out the reaction NAD(+) + (deoxyribonucleotide)n-3'-hydroxyl + 5'-phospho-(deoxyribonucleotide)m = (deoxyribonucleotide)n+m + AMP + beta-nicotinamide D-nucleotide.. Its function is as follows. DNA ligase that catalyzes the formation of phosphodiester linkages between 5'-phosphoryl and 3'-hydroxyl groups in double-stranded DNA using NAD as a coenzyme and as the energy source for the reaction. It is essential for DNA replication and repair of damaged DNA. The sequence is that of DNA ligase from Streptococcus pyogenes serotype M1.